Consider the following 283-residue polypeptide: Pantothenate synthetase (283 aa).

30–37 provides a ligand contact to ATP; that stretch reads MGCLHEGH. Histidine 37 (proton donor) is an active-site residue. Position 61 (glutamine 61) interacts with (R)-pantoate. Beta-alanine is bound at residue glutamine 61. ATP is bound at residue 147 to 150; sequence GQKD. Glutamine 153 contributes to the (R)-pantoate binding site. ATP is bound by residues valine 176 and 184–187; that span reads KSSR.

This sequence belongs to the pantothenate synthetase family. Homodimer.

Its subcellular location is the cytoplasm. The enzyme catalyses (R)-pantoate + beta-alanine + ATP = (R)-pantothenate + AMP + diphosphate + H(+). Its pathway is cofactor biosynthesis; (R)-pantothenate biosynthesis; (R)-pantothenate from (R)-pantoate and beta-alanine: step 1/1. Its function is as follows. Catalyzes the condensation of pantoate with beta-alanine in an ATP-dependent reaction via a pantoyl-adenylate intermediate. This Clostridium novyi (strain NT) protein is Pantothenate synthetase.